A 435-amino-acid chain; its full sequence is Homoserine dehydrogenase (435 aa).

NADPH contacts are provided by T13, V14, R43, and K105. Residue V14 coordinates NAD(+). Positions 14, 43, and 105 each coordinate NADP(+). Na(+) contacts are provided by E129, V132, G134, and I136. Residue K204 is the Proton donor of the active site. Disordered regions lie at residues 255–274 and 377–402; these read ARGV…TPDR and RCDD…PDHV. 2 stretches are compositionally biased toward basic and acidic residues: residues 262-274 and 377-391; these read RAPD…TPDR and RCDD…AERR.

This sequence belongs to the homoserine dehydrogenase family. A metal cation serves as cofactor.

The enzyme catalyses L-homoserine + NADP(+) = L-aspartate 4-semialdehyde + NADPH + H(+). It carries out the reaction L-homoserine + NAD(+) = L-aspartate 4-semialdehyde + NADH + H(+). Its pathway is amino-acid biosynthesis; L-methionine biosynthesis via de novo pathway; L-homoserine from L-aspartate: step 3/3. The protein operates within amino-acid biosynthesis; L-threonine biosynthesis; L-threonine from L-aspartate: step 3/5. Its function is as follows. Catalyzes the conversion of L-aspartate-beta-semialdehyde (L-Asa) to L-homoserine (L-Hse), the third step in the biosynthesis of threonine and methionine from aspartate. In Methylobacillus glycogenes, this protein is Homoserine dehydrogenase (hom).